Reading from the N-terminus, the 256-residue chain is Thiazole synthase (256 aa).

The active-site Schiff-base intermediate with DXP is lysine 95. 1-deoxy-D-xylulose 5-phosphate is bound by residues glycine 156, 182 to 183 (AG), and 204 to 205 (NT).

This sequence belongs to the ThiG family. In terms of assembly, homotetramer. Forms heterodimers with either ThiH or ThiS.

The protein resides in the cytoplasm. The catalysed reaction is [ThiS sulfur-carrier protein]-C-terminal-Gly-aminoethanethioate + 2-iminoacetate + 1-deoxy-D-xylulose 5-phosphate = [ThiS sulfur-carrier protein]-C-terminal Gly-Gly + 2-[(2R,5Z)-2-carboxy-4-methylthiazol-5(2H)-ylidene]ethyl phosphate + 2 H2O + H(+). The protein operates within cofactor biosynthesis; thiamine diphosphate biosynthesis. In terms of biological role, catalyzes the rearrangement of 1-deoxy-D-xylulose 5-phosphate (DXP) to produce the thiazole phosphate moiety of thiamine. Sulfur is provided by the thiocarboxylate moiety of the carrier protein ThiS. In vitro, sulfur can be provided by H(2)S. The chain is Thiazole synthase from Idiomarina loihiensis (strain ATCC BAA-735 / DSM 15497 / L2-TR).